We begin with the raw amino-acid sequence, 267 residues long: Myb-related protein Hv1 (267 aa).

HTH myb-type domains follow at residues 9–61 and 62–116; these read KAHT…INYL and RPDL…RRKL. 2 consecutive DNA-binding regions (H-T-H motif) follow at residues 37-61 and 89-112; these read WRSL…INYL and WSLI…NTHI.

As to expression, germinating seed and apical meristem of shoot and root.

It localises to the nucleus. Its function is as follows. Possible transcription activator in response to an external signal. May be involved in the regulation of flavonoid biosynthesis. The polypeptide is Myb-related protein Hv1 (MYB1) (Hordeum vulgare (Barley)).